The sequence spans 455 residues: UDP-N-acetylmuramoylalanine--D-glutamate ligase (455 aa).

120–126 (GSNGKTT) is a binding site for ATP.

This sequence belongs to the MurCDEF family.

It localises to the cytoplasm. It carries out the reaction UDP-N-acetyl-alpha-D-muramoyl-L-alanine + D-glutamate + ATP = UDP-N-acetyl-alpha-D-muramoyl-L-alanyl-D-glutamate + ADP + phosphate + H(+). It functions in the pathway cell wall biogenesis; peptidoglycan biosynthesis. Functionally, cell wall formation. Catalyzes the addition of glutamate to the nucleotide precursor UDP-N-acetylmuramoyl-L-alanine (UMA). The polypeptide is UDP-N-acetylmuramoylalanine--D-glutamate ligase (Pediococcus pentosaceus (strain ATCC 25745 / CCUG 21536 / LMG 10740 / 183-1w)).